The sequence spans 145 residues: UPF0201 protein M164_1168 (145 aa).

Belongs to the UPF0201 family.

This is UPF0201 protein M164_1168 from Saccharolobus islandicus (strain M.16.4 / Kamchatka #3) (Sulfolobus islandicus).